Consider the following 701-residue polypeptide: MNPVIKKFQFGQSTVTLETGRIARQASGAVLVTVDDDVTVLVTVVGAKTADPSKGFFPLSVHYQEKTYAAGKIPGGFFKREGRPSEKETLTSRLIDRPIRPLFPEGFMNEVQVVCTVVSTSKKTDPDIAAMIGTSAALAISGIPFDGPIGAARVAFHESTGYLLNPTYEQQKASSLDMVVAGTSEAVLMVESEAKELTEDQMLGAVLFAHDEFQVVINAVKELAAEAAKPTWTWAPQPEATALLGAIRSEFGAAISDAYTITVKADRYARLGELKDQVVAKLSGEEGQPSSSEVKAAFGEIEYRTVRENIVNGKPRIDGRDTRTVRPLNIEVGVLPKTHGSALFTRGETQALVVATLGTARDAQLLDTLEGEKKDPFMLHYNFPPFSVGECGRMGGAGRREIGHGRLARRSISAMLPAADVFPYTIRVVSEITESNGSSSMASVCGASLALMDAGVPMKAPVAGIAMGLVKEGQKFAILTDILGDEDHLGDMDFKVAGTAKGVTALQMDIKIKGITEEIMEIALGQALEARLNILGQMNQIIGQSRTELSENAPTMIAMKIDTDKIRDVIGKGGATIRAICEETKASIDIEDDGSIKIFGETKEAAEAARQRVLGITAEAEIGKIYVGKVERIVDFGAFVNILPGKDGLVHISMLSDARVEKVTDILKEGQEVEVLVLDVDNRGRIKLSIKDVAAAKASGV.

Positions 487 and 493 each coordinate Mg(2+). The region spanning 554-613 (PTMIAMKIDTDKIRDVIGKGGATIRAICEETKASIDIEDDGSIKIFGETKEAAEAARQRV) is the KH domain. Residues 623-691 (GKIYVGKVER…NRGRIKLSIK (69 aa)) form the S1 motif domain.

It belongs to the polyribonucleotide nucleotidyltransferase family. Component of the RNA degradosome, which is a multiprotein complex involved in RNA processing and mRNA degradation. It depends on Mg(2+) as a cofactor.

It localises to the cytoplasm. The catalysed reaction is RNA(n+1) + phosphate = RNA(n) + a ribonucleoside 5'-diphosphate. Its function is as follows. Involved in mRNA degradation. Catalyzes the phosphorolysis of single-stranded polyribonucleotides processively in the 3'- to 5'-direction. The sequence is that of Polyribonucleotide nucleotidyltransferase from Pseudomonas fluorescens (strain SBW25).